We begin with the raw amino-acid sequence, 344 residues long: DNA fragmentation factor subunit beta (344 aa).

Residues 7–83 (QPKCVKLRAL…LLTAGETWHG (77 aa)) enclose the CIDE-N domain.

In terms of assembly, heterodimer of DFFA and DFFB. Interacts with H1-1.

Its subcellular location is the cytoplasm. The protein localises to the nucleus. Its activity is regulated as follows. Inhibited by DFFA (DFF45). Nuclease that induces DNA fragmentation and chromatin condensation during apoptosis. Degrades naked DNA and induces apoptotic morphology. This Mus musculus (Mouse) protein is DNA fragmentation factor subunit beta (Dffb).